A 31-amino-acid polypeptide reads, in one-letter code: Cytochrome b6-f complex subunit 6 (31 aa).

Residues 3–23 (ILISYFCFLLVFFLFTLILFI) form a helical membrane-spanning segment.

Belongs to the PetL family. The 4 large subunits of the cytochrome b6-f complex are cytochrome b6, subunit IV (17 kDa polypeptide, PetD), cytochrome f and the Rieske protein, while the 4 small subunits are PetG, PetL, PetM and PetN. The complex functions as a dimer.

It is found in the plastid. The protein resides in the chloroplast thylakoid membrane. Functionally, component of the cytochrome b6-f complex, which mediates electron transfer between photosystem II (PSII) and photosystem I (PSI), cyclic electron flow around PSI, and state transitions. PetL is important for photoautotrophic growth as well as for electron transfer efficiency and stability of the cytochrome b6-f complex. The sequence is that of Cytochrome b6-f complex subunit 6 from Welwitschia mirabilis (Tree tumbo).